A 96-amino-acid chain; its full sequence is MIDAAQIDHLTALARLELSPAERRTMQQDLTRMLGYFEQLGRVPTEGVQEMQRPVSLVNVLRDDAPGETFPSGVVSALAPETQDGFIRVPRTVDTE.

It belongs to the GatC family. In terms of assembly, heterotrimer of A, B and C subunits.

The catalysed reaction is L-glutamyl-tRNA(Gln) + L-glutamine + ATP + H2O = L-glutaminyl-tRNA(Gln) + L-glutamate + ADP + phosphate + H(+). The enzyme catalyses L-aspartyl-tRNA(Asn) + L-glutamine + ATP + H2O = L-asparaginyl-tRNA(Asn) + L-glutamate + ADP + phosphate + 2 H(+). In terms of biological role, allows the formation of correctly charged Asn-tRNA(Asn) or Gln-tRNA(Gln) through the transamidation of misacylated Asp-tRNA(Asn) or Glu-tRNA(Gln) in organisms which lack either or both of asparaginyl-tRNA or glutaminyl-tRNA synthetases. The reaction takes place in the presence of glutamine and ATP through an activated phospho-Asp-tRNA(Asn) or phospho-Glu-tRNA(Gln). The chain is Glutamyl-tRNA(Gln) amidotransferase subunit C from Deinococcus radiodurans (strain ATCC 13939 / DSM 20539 / JCM 16871 / CCUG 27074 / LMG 4051 / NBRC 15346 / NCIMB 9279 / VKM B-1422 / R1).